A 968-amino-acid polypeptide reads, in one-letter code: RNA polymerase-associated protein RapA (968 aa).

The 171-residue stretch at 164 to 334 folds into the Helicase ATP-binding domain; that stretch reads DVGRRHAPRV…FARLRLLDPN (171 aa). Position 177-184 (177-184) interacts with ATP; that stretch reads DEVGLGKT. Positions 280–283 match the DEAH box motif; that stretch reads DEAH. Residues 490 to 685 form the Helicase C-terminal domain; sequence RVEWLMGYLT…ALKAQLEQGR (196 aa).

Belongs to the SNF2/RAD54 helicase family. RapA subfamily. In terms of assembly, interacts with the RNAP. Has a higher affinity for the core RNAP than for the holoenzyme. Its ATPase activity is stimulated by binding to RNAP.

Its function is as follows. Transcription regulator that activates transcription by stimulating RNA polymerase (RNAP) recycling in case of stress conditions such as supercoiled DNA or high salt concentrations. Probably acts by releasing the RNAP, when it is trapped or immobilized on tightly supercoiled DNA. Does not activate transcription on linear DNA. Probably not involved in DNA repair. The sequence is that of RNA polymerase-associated protein RapA from Salmonella newport (strain SL254).